Here is a 103-residue protein sequence, read N- to C-terminus: Flagellar hook-basal body complex protein FliE (103 aa).

It belongs to the FliE family.

The protein localises to the bacterial flagellum basal body. This chain is Flagellar hook-basal body complex protein FliE, found in Photorhabdus laumondii subsp. laumondii (strain DSM 15139 / CIP 105565 / TT01) (Photorhabdus luminescens subsp. laumondii).